We begin with the raw amino-acid sequence, 538 residues long: Methyl-accepting chemotaxis protein NahY (538 aa).

The Cytoplasmic segment spans residues Met-1 to Arg-9. The chain crosses the membrane as a helical span at residues Leu-10–Ser-30. Over Ala-31–Thr-187 the chain is Periplasmic. The chain crosses the membrane as a helical span at residues Met-188 to Ile-208. One can recognise an HAMP domain in the interval Arg-209–Gln-261. Residues Arg-209–Met-538 lie on the Cytoplasmic side of the membrane. The region spanning Ser-266 to Ser-502 is the Methyl-accepting transducer domain.

Belongs to the methyl-accepting chemotaxis (MCP) protein family.

It is found in the cell inner membrane. Chemotactic-signal transducers respond to changes in the concentration of attractants and repellents in the environment, transduce a signal from the outside to the inside of the cell, and facilitate sensory adaptation through the variation of the level of methylation. Chemoreceptor for naphthalene or a related compound. May facilitate biodegradation. The sequence is that of Methyl-accepting chemotaxis protein NahY (nahY) from Pseudomonas putida (Arthrobacter siderocapsulatus).